A 60-amino-acid polypeptide reads, in one-letter code: Large ribosomal subunit protein bL32 (60 aa).

It belongs to the bacterial ribosomal protein bL32 family.

In Borrelia hermsii (strain HS1 / DAH), this protein is Large ribosomal subunit protein bL32.